Reading from the N-terminus, the 303-residue chain is Serine/threonine-protein phosphatase PP-X homolog 2 (303 aa).

D51, H53, D79, and N111 together coordinate Mn(2+). Residue H112 is the Proton donor of the active site. Residues H161 and H235 each coordinate Mn(2+).

The protein belongs to the PPP phosphatase family. PP-4 (PP-X) subfamily. Mn(2+) is required as a cofactor.

It catalyses the reaction O-phospho-L-seryl-[protein] + H2O = L-seryl-[protein] + phosphate. The catalysed reaction is O-phospho-L-threonyl-[protein] + H2O = L-threonyl-[protein] + phosphate. This Paramecium tetraurelia protein is Serine/threonine-protein phosphatase PP-X homolog 2 (Ppx2).